The sequence spans 738 residues: Catalase-peroxidase (738 aa).

The span at 1 to 16 (MSENHDAIVTDAKTEE) shows a compositional bias: basic and acidic residues. Positions 1–37 (MSENHDAIVTDAKTEEAGGCPVAHGRAPHPTQGGGNR) are disordered. A cross-link (tryptophyl-tyrosyl-methioninium (Trp-Tyr) (with M-257)) is located at residues 108-231 (WHSAGTYRIS…LGAVQMGLIY (124 aa)). Catalysis depends on His-109, which acts as the Proton acceptor. The tryptophyl-tyrosyl-methioninium (Tyr-Met) (with W-108) cross-link spans 231–257 (YVNPEGPNGNPDPIAAARDIRETFGRM). Heme b is bound at residue His-272.

It belongs to the peroxidase family. Peroxidase/catalase subfamily. Homodimer or homotetramer. Requires heme b as cofactor. Formation of the three residue Trp-Tyr-Met cross-link is important for the catalase, but not the peroxidase activity of the enzyme.

The catalysed reaction is H2O2 + AH2 = A + 2 H2O. It catalyses the reaction 2 H2O2 = O2 + 2 H2O. Bifunctional enzyme with both catalase and broad-spectrum peroxidase activity. This chain is Catalase-peroxidase, found in Streptomyces ambofaciens.